A 312-amino-acid chain; its full sequence is Acetyl-coenzyme A carboxylase carboxyl transferase subunit alpha (312 aa).

The CoA carboxyltransferase C-terminal domain maps to Asn-36–Glu-286.

The protein belongs to the AccA family. Acetyl-CoA carboxylase is a heterohexamer composed of biotin carboxyl carrier protein (AccB), biotin carboxylase (AccC) and two subunits each of ACCase subunit alpha (AccA) and ACCase subunit beta (AccD).

It localises to the cytoplasm. The catalysed reaction is N(6)-carboxybiotinyl-L-lysyl-[protein] + acetyl-CoA = N(6)-biotinyl-L-lysyl-[protein] + malonyl-CoA. The protein operates within lipid metabolism; malonyl-CoA biosynthesis; malonyl-CoA from acetyl-CoA: step 1/1. Functionally, component of the acetyl coenzyme A carboxylase (ACC) complex. First, biotin carboxylase catalyzes the carboxylation of biotin on its carrier protein (BCCP) and then the CO(2) group is transferred by the carboxyltransferase to acetyl-CoA to form malonyl-CoA. The chain is Acetyl-coenzyme A carboxylase carboxyl transferase subunit alpha from Campylobacter jejuni subsp. jejuni serotype O:6 (strain 81116 / NCTC 11828).